A 117-amino-acid chain; its full sequence is MSGVSTAAYFARRAAQKERVRILYRRALKDTLNWAVHRHIFYRDASDLREKFNVNQDVEDVDRIDKLIAHGEAEYNKWRHPDPYIVPWAPGGSKFCRNPTPPAGIEIVYNYGLEDNP.

At Ser2 the chain carries N-acetylserine.

This sequence belongs to the complex I LYR family. As to quaternary structure, complex I is composed of at least 49 different subunits. Expressed in roots, stems, flowers, rosette leaves, cauline leaves and siliques, with the highest expression in the stems.

It localises to the mitochondrion inner membrane. In terms of biological role, accessory subunit of the mitochondrial membrane respiratory chain NADH dehydrogenase (Complex I), that is believed to be not involved in catalysis. Complex I functions in the transfer of electrons from NADH to the respiratory chain. The immediate electron acceptor for the enzyme is believed to be ubiquinone. Is required for correct plant growth and development. This Arabidopsis thaliana (Mouse-ear cress) protein is NADH dehydrogenase [ubiquinone] 1 beta subcomplex subunit 9 (CIB22).